The chain runs to 819 residues: Tegument protein UL47 homolog (819 aa).

Basic residues predominate over residues 1–15; that stretch reads MQSGHYNRRQSRRQR. Disordered regions lie at residues 1-42 and 58-221; these read MQSG…THPP and LNSE…DYFS. A Nuclear localization signal motif is present at residues 11 to 31; that stretch reads SRRQRISSNTTDSPRHTHGTR. Residues 32–42 show a composition bias toward polar residues; sequence YRSTNWYTHPP. The span at 62–72 shows a compositional bias: acidic residues; the sequence is MDQDSSSDASD. The span at 82–93 shows a compositional bias: polar residues; sequence STYNGSEQNTST. Basic and acidic residues predominate over residues 94-109; the sequence is SRHENRIFKLTEREAN. 5 consecutive repeat copies span residues 117 to 132, 133 to 148, 149 to 164, 165 to 190, and 191 to 206. The interval 117 to 218 is 6 X 16 AA approximate tandem repeats; sequence DAIDDEGEAE…IDDEGEAEED (102 aa). The span at 118-219 shows a compositional bias: acidic residues; it reads AIDDEGEAEE…DDEGEAEEDY (102 aa). A 1-6; truncated repeat occupies 207–218; it reads DAIDDEGEAEED. Residues 785–807 carry the Nuclear export signal motif; that stretch reads QPIPSVDLAENLMQYRNEILGLD.

Belongs to the alphaherpesvirinae HHV-1 UL47 family. In terms of assembly, interacts with US3 kinase. Interacts with ORF24 and ORF27; these interactions seem important for efficient virion nuclear egress. Interacts with ORF17/VHS. Interacts with ORF9. In terms of processing, phosphorylated by US3. This phosphorylation is required for proper nuclear localization.

It localises to the virion tegument. It is found in the host nucleus. The protein resides in the host cytoplasm. In terms of biological role, tegument protein that can bind to various RNA transcripts. Plays a role in the attenuation of selective viral and cellular mRNA degradation by modulating the activity of host shutoff RNase ORF17/VHS. Also plays a role in the primary envelopment of virions in the perinuclear space, probably by interacting with two nuclear egress proteins ORF24 and ORF27. The chain is Tegument protein UL47 homolog from Varicella-zoster virus (strain Dumas) (HHV-3).